Here is a 923-residue protein sequence, read N- to C-terminus: Protocadherin gamma-B4 (923 aa).

A signal peptide spans 1-30 (MGSGAGELGRAERLPVLFLFLLSLFCPALC). Cadherin domains are found at residues 31 to 133 (EQIR…TPKF), 134 to 242 (TQNS…APVF), 243 to 345 (SQDV…APEV), 346 to 450 (IFQS…APVF), 451 to 560 (SQSS…APRV), and 568 to 673 (DGSA…LPDI). Residues 31-689 (EQIRYRIPEE…SDLQAELQFY (659 aa)) are Extracellular-facing. N417 and N543 each carry an N-linked (GlcNAc...) asparagine glycan. Residues 690–710 (LVVALALISVLFLVAMILAIA) form a helical membrane-spanning segment. At 711–923 (LRLRRSSSPA…KKKSGKKEKK (213 aa)) the chain is on the cytoplasmic side. Disordered regions lie at residues 797–832 (SHQQAPPNTDWRFSQAQRPGTSGSQNGDDTGTWPNN) and 893–923 (ATLTNAAGKRDGKAPAGGNGNKKKSGKKEKK). Basic residues predominate over residues 913-923 (NKKKSGKKEKK).

It is found in the cell membrane. Its function is as follows. Potential calcium-dependent cell-adhesion protein. May be involved in the establishment and maintenance of specific neuronal connections in the brain. This is Protocadherin gamma-B4 (PCDHGB4) from Homo sapiens (Human).